The primary structure comprises 921 residues: Isoleucine--tRNA ligase 1 (921 aa).

Positions 57–67 match the 'HIGH' region motif; that stretch reads PYANGDIHMGH. Glu-552 contributes to the L-isoleucyl-5'-AMP binding site. A 'KMSKS' region motif is present at residues 593–597; that stretch reads KMSKS. An ATP-binding site is contributed by Lys-596. Cys-888, Cys-891, Cys-908, and Cys-911 together coordinate Zn(2+).

It belongs to the class-I aminoacyl-tRNA synthetase family. IleS type 1 subfamily. Monomer. It depends on Zn(2+) as a cofactor.

The protein localises to the cytoplasm. The catalysed reaction is tRNA(Ile) + L-isoleucine + ATP = L-isoleucyl-tRNA(Ile) + AMP + diphosphate. In terms of biological role, catalyzes the attachment of isoleucine to tRNA(Ile). As IleRS can inadvertently accommodate and process structurally similar amino acids such as valine, to avoid such errors it has two additional distinct tRNA(Ile)-dependent editing activities. One activity is designated as 'pretransfer' editing and involves the hydrolysis of activated Val-AMP. The other activity is designated 'posttransfer' editing and involves deacylation of mischarged Val-tRNA(Ile). This Bacillus thuringiensis subsp. konkukian (strain 97-27) protein is Isoleucine--tRNA ligase 1.